A 180-amino-acid chain; its full sequence is MFEATTILGYRGEMGGKKFAFIGGDGQVTLGNCVVKANATKIRSLYHNQVLSGFAGSTADAFSLFDMFERILESKKGDLFKSVVDFSKEWRKDKYLRRLEAMMIVLNLDHIFILSGTGDVLEAEDNKIAAIGSGGNYALSAARALDHFAHLEPKKLVEESLKIAGDLCIYTNTNIKILEL.

The active site involves Thr-5. 3 residues coordinate Na(+): Gly-165, Cys-168, and Thr-171.

The protein belongs to the peptidase T1B family. HslV subfamily. In terms of assembly, a double ring-shaped homohexamer of HslV is capped on each side by a ring-shaped HslU homohexamer. The assembly of the HslU/HslV complex is dependent on binding of ATP.

The protein localises to the cytoplasm. The catalysed reaction is ATP-dependent cleavage of peptide bonds with broad specificity.. With respect to regulation, allosterically activated by HslU binding. Functionally, protease subunit of a proteasome-like degradation complex believed to be a general protein degrading machinery. This Helicobacter pylori (strain P12) protein is ATP-dependent protease subunit HslV.